A 166-amino-acid chain; its full sequence is Large ribosomal subunit protein uL10 (166 aa).

Belongs to the universal ribosomal protein uL10 family. As to quaternary structure, part of the ribosomal stalk of the 50S ribosomal subunit. The N-terminus interacts with L11 and the large rRNA to form the base of the stalk. The C-terminus forms an elongated spine to which L12 dimers bind in a sequential fashion forming a multimeric L10(L12)X complex.

Its function is as follows. Forms part of the ribosomal stalk, playing a central role in the interaction of the ribosome with GTP-bound translation factors. The chain is Large ribosomal subunit protein uL10 from Streptococcus pneumoniae (strain 70585).